The primary structure comprises 343 residues: NADH-quinone oxidoreductase subunit H (343 aa).

The next 8 helical transmembrane spans lie at 5-25 (FIIE…LMAM), 76-96 (FLFV…SAVI), 119-139 (ALLY…IGGW), 158-178 (VSYE…TGTL), 190-210 (MNWN…CAFA), 243-263 (LFAE…LFFG), 284-304 (ILGF…YMWV), and 323-343 (ILIP…LLFK).

It belongs to the complex I subunit 1 family. In terms of assembly, NDH-1 is composed of 14 different subunits. Subunits NuoA, H, J, K, L, M, N constitute the membrane sector of the complex.

The protein localises to the cell inner membrane. It carries out the reaction a quinone + NADH + 5 H(+)(in) = a quinol + NAD(+) + 4 H(+)(out). Its function is as follows. NDH-1 shuttles electrons from NADH, via FMN and iron-sulfur (Fe-S) centers, to quinones in the respiratory chain. The immediate electron acceptor for the enzyme in this species is believed to be ubiquinone. Couples the redox reaction to proton translocation (for every two electrons transferred, four hydrogen ions are translocated across the cytoplasmic membrane), and thus conserves the redox energy in a proton gradient. This subunit may bind ubiquinone. This is NADH-quinone oxidoreductase subunit H from Flavobacterium psychrophilum (strain ATCC 49511 / DSM 21280 / CIP 103535 / JIP02/86).